The following is a 179-amino-acid chain: Deoxyuridine 5'-triphosphate nucleotidohydrolase (179 aa).

Residues 90–92, Asn103, 107–109, and Lys117 contribute to the substrate site; these read RSG and TVD.

This sequence belongs to the dUTPase family. Mg(2+) is required as a cofactor.

It carries out the reaction dUTP + H2O = dUMP + diphosphate + H(+). Its pathway is pyrimidine metabolism; dUMP biosynthesis; dUMP from dCTP (dUTP route): step 2/2. This enzyme is involved in nucleotide metabolism: it produces dUMP, the immediate precursor of thymidine nucleotides and it decreases the intracellular concentration of dUTP so that uracil cannot be incorporated into DNA. This is Deoxyuridine 5'-triphosphate nucleotidohydrolase from Thermobifida fusca (strain YX).